We begin with the raw amino-acid sequence, 86 residues long: UPF0180 protein CA_C1486 (86 aa).

The protein belongs to the UPF0180 family.

The chain is UPF0180 protein CA_C1486 from Clostridium acetobutylicum (strain ATCC 824 / DSM 792 / JCM 1419 / IAM 19013 / LMG 5710 / NBRC 13948 / NRRL B-527 / VKM B-1787 / 2291 / W).